Consider the following 846-residue polypeptide: Putative transcriptional regulator tpeD (846 aa).

Residues 104 to 166 (KHQSECWQHF…NCRKSVPVSK (63 aa)) form a BED-type; degenerate zinc finger. Positions 734-846 (RAREERDAQQ…RDEDFVYETP (113 aa)) are disordered. The segment covering 756 to 769 (PISDSEEAESEDES) has biased composition (acidic residues). The segment covering 773 to 786 (PQSPQASQARSQRS) has biased composition (low complexity). A compositionally biased stretch (acidic residues) spans 797-809 (PLIELDGNEEDEV).

The protein resides in the nucleus. Putative transcriptional regulator; part of the gene cluster that mediates the biosynthesis of polyesters containing 2,4-dihydroxy-6-(2-hydroxypropyl)benzoate and 3-hydroxybutyrate moieties, such as talapolyester G, 15G256beta and 15G256beta-2; as well as to oxidized derivatives such as 15G256alpha. The polypeptide is Putative transcriptional regulator tpeD (Talaromyces stipitatus (strain ATCC 10500 / CBS 375.48 / QM 6759 / NRRL 1006) (Penicillium stipitatum)).